The chain runs to 101 residues: Cilia- and flagella-associated protein 141 (101 aa).

In terms of assembly, microtubule inner protein component of sperm flagellar doublet microtubules. Expressed in airway epithelial cells.

Its subcellular location is the cytoplasm. It is found in the cytoskeleton. It localises to the cilium axoneme. The protein resides in the flagellum axoneme. Functionally, microtubule inner protein (MIP) part of the dynein-decorated doublet microtubules (DMTs) in cilia axoneme, which is required for motile cilia beating. The chain is Cilia- and flagella-associated protein 141 from Homo sapiens (Human).